We begin with the raw amino-acid sequence, 192 residues long: Hydrophobin-like protein rodD (192 aa).

Disulfide bonds link cysteine 45-cysteine 106, cysteine 50-cysteine 99, and cysteine 107-cysteine 112.

It belongs to the fungal hydrophobin family. In terms of assembly, self-assembles to form functional amyloid fibrils called rodlets. Self-assembly into fibrillar rodlets occurs spontaneously at hydrophobic:hydrophilic interfaces and the rodlets further associate laterally to form amphipathic monolayers.

Functionally, aerial growth, conidiation, and dispersal of filamentous fungi in the environment rely upon a capability of their secreting small amphipathic proteins called hydrophobins (HPBs) with low sequence identity. Class I can self-assemble into an outermost layer of rodlet bundles on aerial cell surfaces, conferring cellular hydrophobicity that supports fungal growth, development and dispersal; whereas Class II form highly ordered films at water-air interfaces through intermolecular interactions but contribute nothing to the rodlet structure. RodD is a an hydrophobin-like protein that, unlike rodA, is not required for rodlet formation. This Aspergillus fumigatus (strain ATCC MYA-4609 / CBS 101355 / FGSC A1100 / Af293) (Neosartorya fumigata) protein is Hydrophobin-like protein rodD.